A 92-amino-acid polypeptide reads, in one-letter code: Small ribosomal subunit protein uS19c (92 aa).

Belongs to the universal ribosomal protein uS19 family.

The protein resides in the plastid. The protein localises to the chloroplast. In terms of biological role, protein S19 forms a complex with S13 that binds strongly to the 16S ribosomal RNA. The sequence is that of Small ribosomal subunit protein uS19c from Fagopyrum esculentum subsp. ancestrale (Wild buckwheat).